We begin with the raw amino-acid sequence, 480 residues long: Phenylalanine--tRNA ligase alpha subunit (480 aa).

Positions 324 and 407 each coordinate L-phenylalanine. Glutamate 409 lines the Mg(2+) pocket. Phenylalanine 432 lines the L-phenylalanine pocket.

The protein belongs to the class-II aminoacyl-tRNA synthetase family. Phe-tRNA synthetase alpha subunit type 2 subfamily. In terms of assembly, tetramer of two alpha and two beta subunits. The cofactor is Mg(2+).

It is found in the cytoplasm. It carries out the reaction tRNA(Phe) + L-phenylalanine + ATP = L-phenylalanyl-tRNA(Phe) + AMP + diphosphate + H(+). This Methanocaldococcus jannaschii (strain ATCC 43067 / DSM 2661 / JAL-1 / JCM 10045 / NBRC 100440) (Methanococcus jannaschii) protein is Phenylalanine--tRNA ligase alpha subunit.